The sequence spans 2351 residues: Protein FAM186A (2351 aa).

Residues 296–340 are a coiled coil; sequence EAEKELSLKIIRDLSNENEMLQQKLQDAEEKCEQLIRSKIVIEQL. Disordered stretches follow at residues 412 to 460, 470 to 489, 505 to 538, 593 to 667, 809 to 838, 868 to 976, 1805 to 1837, and 1888 to 1907; these read ERTP…SWKR, ETSG…SEAK, EMKS…GKSG, QFDD…SEQS, STVQ…SGMS, LQMK…RGLE, GGQS…PGQP, and FQPP…STPG. A compositionally biased stretch (basic and acidic residues) spans 433–446; that stretch reads DSTKDNVSLKKGDF. Residues 472-484 show a composition bias toward polar residues; it reads SGPNLSDNKSGQK. Over residues 506–520 the composition is skewed to basic and acidic residues; that stretch reads MKSFSEDKSKSPTEA. Residues 527 to 538 show a composition bias toward polar residues; that stretch reads LTETKSQGGKSG. Positions 603-612 are enriched in basic residues; that stretch reads GKIKGKKHHI. 2 stretches are compositionally biased toward basic and acidic residues: residues 619–632 and 812–823; these read SKEE…ELTK and QKDHKEKEKQRQ. Positions 812–860 form a coiled coil; it reads QKDHKEKEKQRQEQYLQEGQEQMSGMSLKQQLLGERNLLKEHYEKISEN. Positions 824–838 are enriched in polar residues; sequence EQYLQEGQEQMSGMS. Composition is skewed to basic and acidic residues over residues 901–912, 939–955, and 964–976; these read AEQEEKQKQRGQ, LEKE…EAKH, and KGKE…RGLE. Pro residues predominate over residues 1816–1835; sequence PQAPPSPGQLPISRAPPTPG. Residues 1894-1907 show a composition bias toward polar residues; it reads AEQSPYLQAPSTPG.

The protein belongs to the FAM186 family.

This is Protein FAM186A (FAM186A) from Homo sapiens (Human).